The primary structure comprises 330 residues: Ribosomal RNA small subunit methyltransferase H (330 aa).

Residues 40–42 (GGY), aspartate 58, phenylalanine 85, aspartate 101, and glutamine 108 each bind S-adenosyl-L-methionine.

This sequence belongs to the methyltransferase superfamily. RsmH family.

It localises to the cytoplasm. It catalyses the reaction cytidine(1402) in 16S rRNA + S-adenosyl-L-methionine = N(4)-methylcytidine(1402) in 16S rRNA + S-adenosyl-L-homocysteine + H(+). Its function is as follows. Specifically methylates the N4 position of cytidine in position 1402 (C1402) of 16S rRNA. This chain is Ribosomal RNA small subunit methyltransferase H, found in Roseobacter denitrificans (strain ATCC 33942 / OCh 114) (Erythrobacter sp. (strain OCh 114)).